The chain runs to 1047 residues: UPF0182 protein Mlut_14990 (1047 aa).

Composition is skewed to gly residues over residues 1–27 (MSFGQGGGGPFGGPPRDGGGTAGGQSG) and 49–59 (GPGGPFGGGGS). The interval 1 to 66 (MSFGQGGGGP…GGSSAARGRG (66 aa)) is disordered. Transmembrane regions (helical) follow at residues 71–91 (PSALVLTIIAVAVLVGLFVVF), 114–134 (VLAKGALFLIAGLGMALAVWL), 168–188 (LVFLGVPLVLGVFAGSTAMNG), 214–234 (FFMATLPFLTLVVGYLISVVL), 266–286 (AHIGITLAVFLLLQGVNFWLN), 314–334 (AILAVTAVIVAGLFVWTVVSG), and 341–361 (IGTAVLVITALVVGTAYPFIV). Disordered regions lie at residues 544 to 568 (GAPAVERDRPQTADSQEDTAYTFSG), 941 to 965 (GDSGAVTPEEKQAEAPAPGEKPTAP), and 1007 to 1047 (EALK…TPSG). Residues 555 to 565 (TADSQEDTAYT) are compositionally biased toward polar residues. Residues 1015–1037 (ADDALGGDAPAQEQAPAEASPAP) are compositionally biased toward low complexity. The span at 1038–1047 (SSSPSPTPSG) shows a compositional bias: pro residues.

The protein belongs to the UPF0182 family.

It is found in the cell membrane. This chain is UPF0182 protein Mlut_14990, found in Micrococcus luteus (strain ATCC 4698 / DSM 20030 / JCM 1464 / CCM 169 / CCUG 5858 / IAM 1056 / NBRC 3333 / NCIMB 9278 / NCTC 2665 / VKM Ac-2230) (Micrococcus lysodeikticus).